The sequence spans 763 residues: MNMIEALLSMRVLFLTQVFGIFLCFPGLTKAGHLHYHSSIEVVIPMKVTEKTRGMNLPNWISYSLKLGGQRYIIHMKIKNLFLTRHLPVFTYSDQDSLLEDYPFVQDDCYYQGYVEGDSESLVSLSSCFGGFHGLLEINNIVYEIMPKKFSRKFEHLVYKVDINKTESRGSSLMQDNITCQVELQKSGNPILKQSSFEDWWTHTKIVELVVVVDKTLYDHYGNYTVMLSDLYSVINIVDTIYEVIGIKILLVGVEVWNKKNLIVIDDVSKSLRLYCRWKASNFLHRLKHDVSHLFIYRHLRGLSGIGSTGGICDPKRSCAVVTFIDRTLNLRAIGVAHHLGHNLGMKHDEDICKCSYSKCIMHMDSPPIPKFSNCSYNYFWSYTVKNTRCLMENMYTKDIFDRTRCGNGVVEDKEQCDCGSLRNCTNDLCCMSNCTLSTGSSCAFGLCCKNCQFLPSGTLCRKRDNICDLPEWCNGTSHECPDDAYVEDGIPCGVSAYCYEKQCNDRNEHCRQIFGQNAKTASVHCYREINTKGDRFGHCGLQGPTYIKCKSNDALCGRIQCDNVVQIPNMKDHSTIHFALVKNVSCWGTDYHTGTSLTDIGDVKDGTECEQNHICINRHCVHISTLDSNCTPAFCNYRGICNNKHHCHCNFHWDPPNCMIRGHGGSVDSGLPPKTNKKKHFFYLLLLQLIILACLLSCLLWLLFNIKGSKRKPQVQPTPVKTKKVSKKVPSQKPSPVPSPSLPQLRMPSRSASPTSSIKSTN.

The signal sequence occupies residues 1–31 (MNMIEALLSMRVLFLTQVFGIFLCFPGLTKA). Residues 32–200 (GHLHYHSSIE…ILKQSSFEDW (169 aa)) constitute a propeptide that is removed on maturation. N-linked (GlcNAc...) asparagine glycosylation is found at Asn164, Asn177, and Asn223. Residues 201-684 (WTHTKIVELV…KTNKKKHFFY (484 aa)) lie on the Extracellular side of the membrane. Residues 205-396 (KIVELVVVVD…NTRCLMENMY (192 aa)) form the Peptidase M12B domain. Intrachain disulfides connect Cys313–Cys390, Cys353–Cys375, and Cys355–Cys360. Residues Asn374, Asn424, Asn434, Asn475, and Asn584 are each glycosylated (N-linked (GlcNAc...) asparagine). Positions 403-489 (RTRCGNGVVE…ECPDDAYVED (87 aa)) constitute a Disintegrin domain. Cys461 and Cys481 are disulfide-bonded. Intrachain disulfides connect Cys631–Cys642, Cys636–Cys648, and Cys650–Cys659. The EGF-like domain maps to 631–660 (CTPAFCNYRGICNNKHHCHCNFHWDPPNCM). Residues 685 to 705 (LLLLQLIILACLLSCLLWLLF) traverse the membrane as a helical segment. Residues 706-763 (NIKGSKRKPQVQPTPVKTKKVSKKVPSQKPSPVPSPSLPQLRMPSRSASPTSSIKSTN) lie on the Cytoplasmic side of the membrane. Residues 712–763 (RKPQVQPTPVKTKKVSKKVPSQKPSPVPSPSLPQLRMPSRSASPTSSIKSTN) form a disordered region. The span at 751–763 (RSASPTSSIKSTN) shows a compositional bias: polar residues.

It is found in the membrane. Functionally, may be involved in spermatogenesis and fertilization. Seems to be a non catalytic metalloprotease-like protein. The polypeptide is Disintegrin and metalloproteinase domain-containing protein 29 (Adam29) (Mus musculus (Mouse)).